We begin with the raw amino-acid sequence, 524 residues long: 2-isopropylmalate synthase (524 aa).

Positions 12-274 (VIIFDTTLRD…WNRIESKMLT (263 aa)) constitute a Pyruvate carboxyltransferase domain. Positions 21, 209, 211, and 245 each coordinate Mn(2+). The regulatory domain stretch occupies residues 398–524 (RLKSLTVIAG…QDAPAVAVAG (127 aa)).

This sequence belongs to the alpha-IPM synthase/homocitrate synthase family. LeuA type 1 subfamily. Homodimer. The cofactor is Mn(2+).

The protein localises to the cytoplasm. It catalyses the reaction 3-methyl-2-oxobutanoate + acetyl-CoA + H2O = (2S)-2-isopropylmalate + CoA + H(+). The protein operates within amino-acid biosynthesis; L-leucine biosynthesis; L-leucine from 3-methyl-2-oxobutanoate: step 1/4. Its function is as follows. Catalyzes the condensation of the acetyl group of acetyl-CoA with 3-methyl-2-oxobutanoate (2-ketoisovalerate) to form 3-carboxy-3-hydroxy-4-methylpentanoate (2-isopropylmalate). In Rhodopseudomonas palustris (strain BisB5), this protein is 2-isopropylmalate synthase.